Here is a 227-residue protein sequence, read N- to C-terminus: Ribonuclease 3 (227 aa).

The 128-residue stretch at 3 to 130 folds into the RNase III domain; that stretch reads TNAISKIIKY…LIGAIYLDGG (128 aa). E43 contributes to the Mg(2+) binding site. D47 is a catalytic residue. Mg(2+) is bound by residues N116 and E119. The active site involves E119. Residues 155 to 224 enclose the DRBM domain; it reads DAKTILQEWA…ASLMLAKINY (70 aa).

Belongs to the ribonuclease III family. Homodimer. Requires Mg(2+) as cofactor.

The protein resides in the cytoplasm. It catalyses the reaction Endonucleolytic cleavage to 5'-phosphomonoester.. Its function is as follows. Digests double-stranded RNA. Involved in the processing of primary rRNA transcript to yield the immediate precursors to the large and small rRNAs (23S and 16S). Processes some mRNAs, and tRNAs when they are encoded in the rRNA operon. Processes pre-crRNA and tracrRNA of type II CRISPR loci if present in the organism. This Ehrlichia ruminantium (strain Welgevonden) protein is Ribonuclease 3.